The chain runs to 491 residues: Chromosomal replication initiator protein DnaA (491 aa).

The segment at 1-69 (MTTWDKCLKK…TIQECHGNDL (69 aa)) is domain I, interacts with DnaA modulators. Positions 69-154 (LIIEYSNKKF…KEDEEYSFGL (86 aa)) are domain II. Residues 155–371 (PLKEKYVFDS…GALNRVLTTS (217 aa)) are domain III, AAA+ region. Positions 199, 201, 202, and 203 each coordinate ATP. The interval 372-491 (KFNHKDPTIE…YELLLDKISR (120 aa)) is domain IV, binds dsDNA.

Belongs to the DnaA family. In terms of assembly, oligomerizes as a right-handed, spiral filament on DNA at oriC.

It is found in the cytoplasm. In terms of biological role, plays an essential role in the initiation and regulation of chromosomal replication. ATP-DnaA binds to the origin of replication (oriC) to initiate formation of the DNA replication initiation complex once per cell cycle. Binds the DnaA box (a 9 base pair repeat at the origin) and separates the double-stranded (ds)DNA. Forms a right-handed helical filament on oriC DNA; dsDNA binds to the exterior of the filament while single-stranded (ss)DNA is stabiized in the filament's interior. The ATP-DnaA-oriC complex binds and stabilizes one strand of the AT-rich DNA unwinding element (DUE), permitting loading of DNA polymerase. After initiation quickly degrades to an ADP-DnaA complex that is not apt for DNA replication. Binds acidic phospholipids. This Francisella tularensis subsp. holarctica (strain FTNF002-00 / FTA) protein is Chromosomal replication initiator protein DnaA.